The following is a 231-amino-acid chain: MEKIVGIVVAAGKSKRFGEDKLLINIKGMPIVYYSIRKLHDIKDIEKIILVVRNEMLEYYKEKIKDWKLEKVYKLVLGGEERQDSVYNALKSVDFHCDYVLIHDAARPFVSIKKIEELIKFCTENSLSAILGIPVKDTIKVVDNTTKRIMETLDRSKLWIIQTPQMFPFEIIKEAHKKAREENFVGTDDASLVERLGIPVYVIEGEPFNIKITTKDDLLWMEGILSKSELV.

This sequence belongs to the IspD/TarI cytidylyltransferase family. IspD subfamily.

The enzyme catalyses 2-C-methyl-D-erythritol 4-phosphate + CTP + H(+) = 4-CDP-2-C-methyl-D-erythritol + diphosphate. Its pathway is isoprenoid biosynthesis; isopentenyl diphosphate biosynthesis via DXP pathway; isopentenyl diphosphate from 1-deoxy-D-xylulose 5-phosphate: step 2/6. Functionally, catalyzes the formation of 4-diphosphocytidyl-2-C-methyl-D-erythritol from CTP and 2-C-methyl-D-erythritol 4-phosphate (MEP). This is 2-C-methyl-D-erythritol 4-phosphate cytidylyltransferase from Dictyoglomus thermophilum (strain ATCC 35947 / DSM 3960 / H-6-12).